Here is a 562-residue protein sequence, read N- to C-terminus: Glutamate--tRNA ligase (562 aa).

The 'HIGH' region signature appears at 104-114; that stretch reads PNPDFYMTLGN.

This sequence belongs to the class-I aminoacyl-tRNA synthetase family. Glutamate--tRNA ligase type 2 subfamily.

It is found in the cytoplasm. It catalyses the reaction tRNA(Glu) + L-glutamate + ATP = L-glutamyl-tRNA(Glu) + AMP + diphosphate. In terms of biological role, catalyzes the attachment of glutamate to tRNA(Glu) in a two-step reaction: glutamate is first activated by ATP to form Glu-AMP and then transferred to the acceptor end of tRNA(Glu). The chain is Glutamate--tRNA ligase from Ignicoccus hospitalis (strain KIN4/I / DSM 18386 / JCM 14125).